The following is a 165-amino-acid chain: Minor capsid protein VP2 (165 aa).

Belongs to the sapovirus VP2 family. As to quaternary structure, homooligomer. The portal-like structure consists in 12 copies of VP2. Interacts with capsid protein VP1.

The protein resides in the virion. The protein localises to the host cytoplasm. Minor structural protein that forms a portal-like structure at a unique three-fold axis of symmetry, following binding to the host receptor. The channel formed by VP2 may allow the delivery of the viral genome through the host endosomal membrane. This chain is Minor capsid protein VP2, found in Homo sapiens (Human).